A 257-amino-acid polypeptide reads, in one-letter code: Ribosomal RNA small subunit methyltransferase A (257 aa).

S-adenosyl-L-methionine-binding residues include N12, L14, G39, E60, D85, and N105.

This sequence belongs to the class I-like SAM-binding methyltransferase superfamily. rRNA adenine N(6)-methyltransferase family. RsmA subfamily.

It is found in the cytoplasm. It carries out the reaction adenosine(1518)/adenosine(1519) in 16S rRNA + 4 S-adenosyl-L-methionine = N(6)-dimethyladenosine(1518)/N(6)-dimethyladenosine(1519) in 16S rRNA + 4 S-adenosyl-L-homocysteine + 4 H(+). Functionally, specifically dimethylates two adjacent adenosines (A1518 and A1519) in the loop of a conserved hairpin near the 3'-end of 16S rRNA in the 30S particle. May play a critical role in biogenesis of 30S subunits. In Methylococcus capsulatus (strain ATCC 33009 / NCIMB 11132 / Bath), this protein is Ribosomal RNA small subunit methyltransferase A.